The sequence spans 267 residues: tRNA-cytidine(32) 2-sulfurtransferase 2 (267 aa).

The PP-loop motif motif lies at 42-47 (SGGKDS). Residues Cys-117, Cys-120, and Cys-208 each coordinate [4Fe-4S] cluster.

It belongs to the TtcA family. In terms of assembly, homodimer. Mg(2+) serves as cofactor. Requires [4Fe-4S] cluster as cofactor.

It is found in the cytoplasm. It catalyses the reaction cytidine(32) in tRNA + S-sulfanyl-L-cysteinyl-[cysteine desulfurase] + AH2 + ATP = 2-thiocytidine(32) in tRNA + L-cysteinyl-[cysteine desulfurase] + A + AMP + diphosphate + H(+). The protein operates within tRNA modification. Its function is as follows. Catalyzes the ATP-dependent 2-thiolation of cytidine in position 32 of tRNA, to form 2-thiocytidine (s(2)C32). The sulfur atoms are provided by the cysteine/cysteine desulfurase (IscS) system. In Francisella tularensis subsp. holarctica (strain FTNF002-00 / FTA), this protein is tRNA-cytidine(32) 2-sulfurtransferase 2.